Consider the following 929-residue polypeptide: LPS-assembly protein LptD (929 aa).

The N-terminal stretch at 1-33 (MAVKSLVFRRKFPLLVTGSLLALQPVAALTVQA) is a signal peptide. Positions 58–101 (NLPPRPAHTATSVSTAAAGSSVSGSGGETVEAEPTQRLVTESGG) are disordered. Residues 66-90 (TATSVSTAAAGSSVSGSGGETVEAE) are compositionally biased toward low complexity.

This sequence belongs to the LptD family. In terms of assembly, component of the lipopolysaccharide transport and assembly complex. Interacts with LptE and LptA.

The protein localises to the cell outer membrane. Together with LptE, is involved in the assembly of lipopolysaccharide (LPS) at the surface of the outer membrane. This chain is LPS-assembly protein LptD, found in Pseudomonas aeruginosa (strain LESB58).